Here is a 243-residue protein sequence, read N- to C-terminus: Sarcospan (243 aa).

Positions 1 to 43 (MGKNKQPRGQQRQGGPPAADAAGPDDMEPKKGTGAPKECGEEE) are disordered. Residues 1–53 (MGKNKQPRGQQRQGGPPAADAAGPDDMEPKKGTGAPKECGEEEPRTCCGCRFP) are Cytoplasmic-facing. Over residues 7 to 24 (PRGQQRQGGPPAADAAGP) the composition is skewed to low complexity. The helical transmembrane segment at 54–74 (LLLALLQLALGIAVTVVGFLM) threads the bilayer. The Extracellular portion of the chain corresponds to 75–86 (ASISSSLLVRDT). A helical membrane pass occupies residues 87 to 107 (PFWAGIIVCLVAYLGLFMLCV). Residues 108-122 (SYQVDERTCIQFSMK) lie on the Cytoplasmic side of the membrane. The helical transmembrane segment at 123 to 143 (LLYFLLSALGLTVCVLAVAFA) threads the bilayer. Over 144 to 193 (AHHYSQLTQFTCETTLDSCQCKLPSSEPLSRTFVYRDVTDCTSVTGTFKL) the chain is Extracellular. Residues 194–214 (FLLIQMILNLVCGLVCLLACF) traverse the membrane as a helical segment. The Cytoplasmic segment spans residues 215-243 (VMWKHRYQVFYVGVRICSLTASEGPQQKI).

Isoform 1 is expressed exclusively in heart and skeletal muscle. Isoform 2 is expressed in heart, skeletal muscle, thymus, prostate, testis, ovary, small intestine, colon and spleen.

The protein resides in the cell membrane. The protein localises to the sarcolemma. Its subcellular location is the postsynaptic cell membrane. Component of the dystrophin-glycoprotein complex (DGC), a complex that spans the muscle plasma membrane and forms a link between the F-actin cytoskeleton and the extracellular matrix. Preferentially associates with the sarcoglycan subcomplex of the DGC. This chain is Sarcospan (SSPN), found in Homo sapiens (Human).